Here is an 86-residue protein sequence, read N- to C-terminus: Small ribosomal subunit protein bS20 (86 aa).

Positions 1–22 (MANIKSAKKRAVQSEKRRKHNA) are enriched in basic residues. A disordered region spans residues 1–28 (MANIKSAKKRAVQSEKRRKHNASGRSMM).

Belongs to the bacterial ribosomal protein bS20 family.

Its function is as follows. Binds directly to 16S ribosomal RNA. The protein is Small ribosomal subunit protein bS20 of Serratia proteamaculans (strain 568).